Reading from the N-terminus, the 384-residue chain is UDP-N-acetylglucosamine--N-acetylmuramyl-(pentapeptide) pyrophosphoryl-undecaprenol N-acetylglucosamine transferase (384 aa).

Residues 17-19 (TGG), Asn131, Arg172, Ser200, and Gln301 contribute to the UDP-N-acetyl-alpha-D-glucosamine site.

This sequence belongs to the glycosyltransferase 28 family. MurG subfamily.

It is found in the cell inner membrane. The enzyme catalyses di-trans,octa-cis-undecaprenyl diphospho-N-acetyl-alpha-D-muramoyl-L-alanyl-D-glutamyl-meso-2,6-diaminopimeloyl-D-alanyl-D-alanine + UDP-N-acetyl-alpha-D-glucosamine = di-trans,octa-cis-undecaprenyl diphospho-[N-acetyl-alpha-D-glucosaminyl-(1-&gt;4)]-N-acetyl-alpha-D-muramoyl-L-alanyl-D-glutamyl-meso-2,6-diaminopimeloyl-D-alanyl-D-alanine + UDP + H(+). It functions in the pathway cell wall biogenesis; peptidoglycan biosynthesis. In terms of biological role, cell wall formation. Catalyzes the transfer of a GlcNAc subunit on undecaprenyl-pyrophosphoryl-MurNAc-pentapeptide (lipid intermediate I) to form undecaprenyl-pyrophosphoryl-MurNAc-(pentapeptide)GlcNAc (lipid intermediate II). The chain is UDP-N-acetylglucosamine--N-acetylmuramyl-(pentapeptide) pyrophosphoryl-undecaprenol N-acetylglucosamine transferase from Granulibacter bethesdensis (strain ATCC BAA-1260 / CGDNIH1).